Here is a 722-residue protein sequence, read N- to C-terminus: Delta-like protein 1 (722 aa).

The first 17 residues, 1 to 17 (MGRRSALALAVVSALLC), serve as a signal peptide directing secretion. Residues 18–545 (QVWSSGVFEL…MESQGGPFPW (528 aa)) are Extracellular-facing. The region spanning 176-220 (FVCDEHYYGEGCSVFCRPRDDAFGHFTCGDRGEKMCDPGWKGQYC) is the DSL domain. 27 disulfide bridges follow: cysteine 178–cysteine 187, cysteine 191–cysteine 203, cysteine 211–cysteine 220, cysteine 225–cysteine 236, cysteine 229–cysteine 242, cysteine 244–cysteine 253, cysteine 256–cysteine 267, cysteine 262–cysteine 273, cysteine 275–cysteine 284, cysteine 291–cysteine 303, cysteine 297–cysteine 313, cysteine 315–cysteine 324, cysteine 331–cysteine 342, cysteine 336–cysteine 351, cysteine 353–cysteine 362, cysteine 369–cysteine 380, cysteine 374–cysteine 390, cysteine 392–cysteine 401, cysteine 408–cysteine 419, cysteine 413–cysteine 428, cysteine 430–cysteine 439, cysteine 446–cysteine 457, cysteine 451–cysteine 466, cysteine 468–cysteine 477, cysteine 484–cysteine 495, cysteine 489–cysteine 504, and cysteine 506–cysteine 515. EGF-like domains are found at residues 225 to 253 (CLPG…GRYC), 256 to 284 (CIRY…GLFC), and 291 to 324 (CTHH…GANC). Residues 331–362 (CAPSPCKNGASCTDLEDSFSCTCPPGFYGKVC) enclose the EGF-like 4; calcium-binding domain. EGF-like domains follow at residues 369–401 (CADG…GFNC) and 408–439 (CGSS…GRYC). The 32-residue stretch at 446–477 (CASSPCANGGTCRDSVNDFSCTCPPGYTGKNC) folds into the EGF-like 7; calcium-binding domain. A glycan (N-linked (GlcNAc...) asparagine) is linked at asparagine 476. Residues 484 to 515 (CEHAPCHNGATCHQRGQRYMCECAQGYGGPNC) enclose the EGF-like 8 domain. A helical transmembrane segment spans residues 546 to 568 (VAVCAGVVLVLLLLLGCAAVVVC). Residues 569 to 722 (VRLKLQKHQP…KDECVIATEV (154 aa)) lie on the Cytoplasmic side of the membrane. A Glycyl lysine isopeptide (Lys-Gly) (interchain with G-Cter in ubiquitin) cross-link involves residue lysine 613. The residue at position 638 (threonine 638) is a Phosphothreonine. Basic and acidic residues predominate over residues 655–664 (RDTHSKRDTK). Positions 655–697 (RDTHSKRDTKCQSQSSAGEEKIAPTLRGGEIPDRKRPESVYST) are disordered. Serine 693 carries the post-translational modification Phosphoserine; by PKB. Position 696 is a phosphoserine (serine 696). Residues 719 to 722 (ATEV) are interaction with MAGI1.

In terms of assembly, homodimer. Interacts with TJP1. Interacts with MMP14; inhibits DLL1-induced Notch signaling. Interacts with MAGI1 (via PDZ domain); forms a complex with CTNNB1 and CDH2 and promotes recruitment to the adherens junction and stabilization on the cell surface. Interacts with PSEN1; undergoes a presenilin-dependent gamma-secretase cleavage that releases a Dll1-intracellular form. Interacts with MFAP5. Interacts with MIB1. Interacts with NEURL1B; leads to ubiquitination. Interacts with NEURL1. Interacts with SYNJ2BP; enhances DLL1 protein stability, and promotes Notch signaling in endothelial cells. Interacts with MAGI1, MAGI2, MAGI3 and MPDZ. Interacts (via ubiquitin) with EPN1 (via IUM domain); binding with NOTCH1 attached to neighboring cell, promotes ligand ubiquitination and EPN1 interaction, leading to NECD transendocytosis and Notch signaling. Interacts with NOTCH1. Post-translationally, ubiquitinated by MIB (MIB1 or MIB2), leading to its endocytosis and subsequent degradation. Ubiquitinated; promotes recycling back to the plasma membrane and confers a strong affinity for NOTCH1. Multi-ubiquitination of Lys-613 by MIB1 promotes both cis and trans-interaction with NOTCH1, as well as activation of Notch signaling. Ubiquitinated by NEURL1B. In terms of processing, phosphorylated in a membrane association-dependent manner. Phosphorylation at Ser-696 requires the presence of Ser-693, whereas phosphorylation at Thr-638 and Ser-693 occurs independently of the other sites. Phosphorylation is required for full ligand activity in vitro and affects surface presentation, ectodomain shedding, and endocytosis. Cleaved by MMP14; negatively regulates DLL1-induced Notch signaling in HPCs, modulating B-lymphocyte differentiation in bone marrow. Undergoes two consecutive processing events: a shedding event, partially by ADAM10, that generates a soluble extracellular form and an intracellular membrane-anchored form, followed by a gamma-secretase cleavage releasing an intracellular fragment. Post-translationally, O-fucosylated. Can be elongated to a disaccharide by MFNG. As to expression, in the embryo, expressed in the paraxial mesoderm and nervous system. Expressed at high levels in adult heart and at lower levels, in adult lung. Highly expressed in satellite cells from masseter and tongue than in satellite cells from leg and extraocular muscle.?.

Its subcellular location is the apical cell membrane. It is found in the cell junction. It localises to the adherens junction. The protein localises to the membrane raft. The protein resides in the cell membrane. Its subcellular location is the nucleus. Transmembrane ligand protein of NOTCH1, NOTCH2 and NOTCH3 receptors that binds the extracellular domain (ECD) of Notch receptor in a cis and trans fashion manner. Following transinteraction, ligand cells produce mechanical force that depends of a clathrin-mediated endocytosis, requiring ligand ubiquitination, EPN1 interaction, and actin polymerisation; these events promote Notch receptor extracellular domain (NECD) transendocytosis and triggers Notch signaling through induction of cleavage, hyperphosphorylation, and nuclear accumulation of the intracellular domain of Notch receptors (NICD). Is required for embryonic development and maintenance of adult stem cells in many different tissues and immune systeme; the DLL1-induced Notch signaling is mediated through an intercellular communication that regulates cell lineage, cell specification, cell patterning and morphogenesis through effects on differentiation and proliferation. Plays a role in brain development at different level, namely by regulating neuronal differentiation of neural precursor cells via cell-cell interaction, most likely through the lateral inhibitory system in an endogenous level dependent-manner. During neocortex development, Dll1-Notch signaling transmission is mediated by dynamic interactions between intermediate neurogenic progenitors and radial glia; the cell-cell interactions are mediated via dynamic and transient elongation processes, likely to reactivate/maintain Notch activity in neighboring progenitors, and coordinate progenitor cell division and differentiation across radial and zonal boundaries. During cerebellar development, regulates Bergmann glial monolayer formation and its morphological maturation through a Notch signaling pathway. At the retina and spinal cord level, regulates neurogenesis by preventing the premature differentiation of neural progenitors and also by maintaining progenitors in spinal cord through Notch signaling pathway. Also controls neurogenesis of the neural tube in a progenitor domain-specific fashion along the dorsoventral axis. Maintains quiescence of neural stem cells and plays a role as a fate determinant that segregates asymmetrically to one daughter cell during neural stem cells mitosis, resulting in neuronal differentiation in Dll1-inheriting cell. Plays a role in immune systeme development, namely the development of all T-cells and marginal zone (MZ) B cells. Blocks the differentiation of progenitor cells into the B-cell lineage while promoting the emergence of a population of cells with the characteristics of a T-cell/NK-cell precursor. Upon MMP14 cleavage, negatively regulates Notch signaling in haematopoietic progenitor cells to specifically maintain normal B-cell development in bone marrow. Also plays a role during muscle development. During early development, inhibits myoblasts differentiation from the medial dermomyotomal lip and later regulates progenitor cell differentiation. Directly modulates cell adhesion and basal lamina formation in satellite cells through Notch signaling. Maintains myogenic progenitors pool by suppressing differentiation through down-regulation of MYOD1 and is required for satellite cell homing and PAX7 expression. During craniofacial and trunk myogenesis suppresses differentiation of cranial mesoderm-derived and somite-derived muscle via MYOD1 regulation but in cranial mesoderm-derived progenitors, is neither required for satellite cell homing nor for PAX7 expression. Also plays a role during pancreatic cell development. During type B pancreatic cell development, may be involved in the initiation of proximodistal patterning in the early pancreatic epithelium. Stimulates multipotent pancreatic progenitor cells proliferation and pancreatic growth by maintaining HES1 expression and PTF1A protein levels. During fetal stages of development, is required to maintain arterial identity and the responsiveness of arterial endothelial cells for VEGFA through regulation of KDR activation and NRP1 expression. Controls sprouting angiogenesis and subsequent vertical branch formation through regulation on tip cell differentiation. Negatively regulates goblet cell differentiation in intestine and controls secretory fat commitment through lateral inhibition in small intestine. Plays a role during inner ear development; negatively regulates auditory hair cell differentiation. Plays a role during nephron development through Notch signaling pathway. Regulates growth, blood pressure and energy homeostasis. The polypeptide is Delta-like protein 1 (Dll1) (Mus musculus (Mouse)).